An 871-amino-acid chain; its full sequence is MIKKFDKKDEESGSGSNPFQHLEKSAVLQEARIFNETPINPRRCLHILTKILYLLNQGEHFGTTEATEAFFAMTRLFQSNDQTLRRMCYLTIKEMATISEDVIIVTSSLTKDMTGKEDVYRGPAIRALCRITDGTMLQAIERYMKQAIVDKVSSVSSSALVSSLHMMKISYDVVKRWINEAQEAASSDNIMVQYHALGVLYHLRKNDRLAVSKMLNKFTKSGLKSQFAYCMLIRIASRLLKETEDGHESPLFDFIESCLRNKHEMVIYEAASAIIHLPNCTARELAPAVSVLQLFCSSPKPALRYAAVRTLNKVAMKHPSAVTACNLDLENLITDSNRSIATLAITTLLKTGSESSVDRLMKQISSFVSEISDEFKVVVVQAISALCQKYPRKHSVMMTFLSNMLRDDGGFEYKRAIVDCIISIVEENPESKEAGLAHLCEFIEDCEHTVLATKILHLLGKEGPRTPVPSKYIRFIFNRVVLENEAVRAAAVSALAKFGAQNESLLPSILVLLQRCMMDTDDEVRDRATFYLNVLQQRQMALNATYIFNGLTVSVPGMEKALHQYTLEPSEKPFDMKSIPLAMAPVFEQKAEITLVATKPEKLAPSRQDIFQEQLAAIPEFLNIGPLFKSSEPVQLTEAETEYFVRCIKHMFTNHIVFQFDCTNTLNDQLLEKVTVQMEPSDSYEVLSCIPAPSLPYNQPGICYTLVRLPDDDPTAVAGSFSCTMKFTVRDCDPNTGVPDEDGYDDEYVLEDLEVTVSDHIQKVLKPNFAAAWEEVGDTFEKEETFALSSTKTLEEAVNNIITFLGMQPCERSDKVPENKNSHSLYLAGIFRGGYDLLVRSRLALADGVTMQVTVRSKERTPVDVILASVG.

Residues 1–11 (MIKKFDKKDEE) are compositionally biased toward basic and acidic residues. Residues 1–21 (MIKKFDKKDEESGSGSNPFQH) are disordered. HEAT repeat units follow at residues 64 to 101 (TEAT…ISED), 283 to 320 (RELA…KHPS), 321 to 355 (AVTA…GSES), 356 to 392 (SVDR…KYPR), 395 to 430 (SVMM…ENPE), and 467 to 504 (PVPS…QNES). At T594 the chain carries Phosphothreonine.

The protein belongs to the COPG family. As to quaternary structure, oligomeric complex. Binds to CDC42. Interacts with JAGN1. Interacts with TMED10 (via cytoplasmic domain).

The protein resides in the cytoplasm. It localises to the cytosol. Its subcellular location is the golgi apparatus membrane. The protein localises to the cytoplasmic vesicle. It is found in the COPI-coated vesicle membrane. The coatomer is a cytosolic protein complex that binds to dilysine motifs and reversibly associates with Golgi non-clathrin-coated vesicles, which further mediate biosynthetic protein transport from the ER, via the Golgi up to the trans Golgi network. Coatomer complex is required for budding from Golgi membranes, and is essential for the retrograde Golgi-to-ER transport of dilysine-tagged proteins. In mammals, the coatomer can only be recruited by membranes associated to ADP-ribosylation factors (ARFs), which are small GTP-binding proteins; the complex also influences the Golgi structural integrity, as well as the processing, activity, and endocytic recycling of LDL receptors. This is Coatomer subunit gamma-2 (COPG2) from Homo sapiens (Human).